Reading from the N-terminus, the 351-residue chain is Small ribosomal subunit biogenesis GTPase RsgA 1 (351 aa).

Positions 100–258 (LRTDAQIVAS…IIDTPGMREL (159 aa)) constitute a CP-type G domain. Residues 148-151 (SKVD) and 200-208 (GSSGAGKST) each bind GTP. Cysteine 282, cysteine 287, histidine 289, and cysteine 295 together coordinate Zn(2+).

It belongs to the TRAFAC class YlqF/YawG GTPase family. RsgA subfamily. As to quaternary structure, monomer. Associates with 30S ribosomal subunit, binds 16S rRNA. Zn(2+) is required as a cofactor.

The protein resides in the cytoplasm. Functionally, one of several proteins that assist in the late maturation steps of the functional core of the 30S ribosomal subunit. Helps release RbfA from mature subunits. May play a role in the assembly of ribosomal proteins into the subunit. Circularly permuted GTPase that catalyzes slow GTP hydrolysis, GTPase activity is stimulated by the 30S ribosomal subunit. The protein is Small ribosomal subunit biogenesis GTPase RsgA 1 of Oceanobacillus iheyensis (strain DSM 14371 / CIP 107618 / JCM 11309 / KCTC 3954 / HTE831).